The following is a 184-amino-acid chain: PXMP2/4 family protein 3 (184 aa).

An N-terminal signal peptide occupies residues 1–44 (MSNSKPLSLTDAVTTWYMKKLKSKPIQTKALTSATLSFISSVVA). Transmembrane regions (helical) follow at residues 58 to 78 (VVKF…WHII), 97 to 117 (IVDQ…VLAI), and 159 to 179 (LRVL…SILA).

The protein belongs to the peroxisomal membrane protein PXMP2/4 family.

The protein localises to the membrane. This Dictyostelium discoideum (Social amoeba) protein is PXMP2/4 family protein 3.